Consider the following 432-residue polypeptide: Pentatricopeptide repeat-containing protein 2, mitochondrial (432 aa).

Residues Met-1–Ser-33 constitute a mitochondrion transit peptide. PPR repeat units follow at residues Lys-108–Pro-142, Ser-143–Ser-179, Asn-360–Pro-394, and Thr-395–Val-429.

It localises to the mitochondrion. Mitochondrial RNA-binding protein that acts as a general translation factor. Plays a critical role in the synthesis of all mitochondrial DNA-encoded oxidative phosphorylation subunits, which are essential for mitochondrial respiration. Essential for the expression of iron-sulfur cluster (ISC) proteins as well as other heme proteins related to iron-sensing, and thus plays a key role in iron homeostasis. The sequence is that of Pentatricopeptide repeat-containing protein 2, mitochondrial from Schizosaccharomyces pombe (strain 972 / ATCC 24843) (Fission yeast).